Here is a 215-residue protein sequence, read N- to C-terminus: Cytochrome c biogenesis ATP-binding export protein CcmA (215 aa).

In terms of domain architecture, ABC transporter spans L8 to A215. G40–T47 is an ATP binding site.

Belongs to the ABC transporter superfamily. CcmA exporter (TC 3.A.1.107) family. In terms of assembly, the complex is composed of two ATP-binding proteins (CcmA) and two transmembrane proteins (CcmB).

It localises to the cell inner membrane. It carries out the reaction heme b(in) + ATP + H2O = heme b(out) + ADP + phosphate + H(+). In terms of biological role, part of the ABC transporter complex CcmAB involved in the biogenesis of c-type cytochromes; once thought to export heme, this seems not to be the case, but its exact role is uncertain. Responsible for energy coupling to the transport system. The polypeptide is Cytochrome c biogenesis ATP-binding export protein CcmA (Pseudomonas syringae pv. syringae (strain B728a)).